The chain runs to 1031 residues: Error-prone DNA polymerase (1031 aa).

This sequence belongs to the DNA polymerase type-C family. DnaE2 subfamily.

The protein resides in the cytoplasm. The catalysed reaction is DNA(n) + a 2'-deoxyribonucleoside 5'-triphosphate = DNA(n+1) + diphosphate. DNA polymerase involved in damage-induced mutagenesis and translesion synthesis (TLS). It is not the major replicative DNA polymerase. This is Error-prone DNA polymerase from Pseudomonas syringae pv. tomato (strain ATCC BAA-871 / DC3000).